The following is an 83-amino-acid chain: Large ribosomal subunit protein bL31 (83 aa).

The protein belongs to the bacterial ribosomal protein bL31 family. Type A subfamily. As to quaternary structure, part of the 50S ribosomal subunit.

Functionally, binds the 23S rRNA. The sequence is that of Large ribosomal subunit protein bL31 from Gloeothece citriformis (strain PCC 7424) (Cyanothece sp. (strain PCC 7424)).